The sequence spans 271 residues: Elongation factor Ts (271 aa).

Residues 76–79 (TDFV) form an involved in Mg(2+) ion dislocation from EF-Tu region.

It belongs to the EF-Ts family.

The protein resides in the cytoplasm. Its function is as follows. Associates with the EF-Tu.GDP complex and induces the exchange of GDP to GTP. It remains bound to the aminoacyl-tRNA.EF-Tu.GTP complex up to the GTP hydrolysis stage on the ribosome. The polypeptide is Elongation factor Ts (Saccharopolyspora erythraea (strain ATCC 11635 / DSM 40517 / JCM 4748 / NBRC 13426 / NCIMB 8594 / NRRL 2338)).